A 40-amino-acid chain; its full sequence is Snaclec LmrLEC-1 (40 aa).

The cysteines at positions 2 and 13 are disulfide-linked.

The protein belongs to the snaclec family. Dimer (non-covalently linked) of heterodimers of subunits alpha and beta (disulfide-linked). Expressed by the venom gland.

Its subcellular location is the secreted. In terms of biological role, interferes with one step of hemostasis (modulation of platelet aggregation, or coagulation cascade, for example). The protein is Snaclec LmrLEC-1 of Lachesis muta rhombeata (Bushmaster).